Here is a 271-residue protein sequence, read N- to C-terminus: Proteasome inhibitor PI31 subunit (271 aa).

N-acetylalanine is present on alanine 2. An important for homodimerization and interaction with FBXO7 region spans residues 2–150; that stretch reads AGLEVLFASA…PIHEQWEKVR (149 aa). Phosphoserine is present on residues serine 153 and serine 189. Residue arginine 205 is modified to Omega-N-methylarginine. Residue arginine 219 is modified to Asymmetric dimethylarginine. Positions 221–271 are disordered; that stretch reads LIDPSSGLPNRLPPGAVPPGARFDPFGPIGTSPSGPNPDHLPPPGYDDMYL. Arginine 231 bears the Omega-N-methylarginine mark. Serine 252 is modified (phosphoserine). Residues 255–265 show a composition bias toward pro residues; sequence GPNPDHLPPPG.

It belongs to the proteasome inhibitor PI31 family. In terms of assembly, monomer and homodimer. Interacts with FBXO7.

It localises to the cytoplasm. The protein resides in the endoplasmic reticulum. Functionally, plays an important role in control of proteasome function. Inhibits the hydrolysis of protein and peptide substrates by the 20S proteasome. Also inhibits the activation of the proteasome by the proteasome regulatory proteins PA700 and PA28. The chain is Proteasome inhibitor PI31 subunit (Psmf1) from Rattus norvegicus (Rat).